Reading from the N-terminus, the 292-residue chain is Inositol monophosphatase 2 (292 aa).

Residues Glu75, Asp94, Ile96, Asp97, and Asp231 each coordinate Mg(2+). Substrate is bound at residue Glu75. Substrate-binding positions include 96–99 (IDGT) and Asp231.

Belongs to the inositol monophosphatase superfamily. It depends on Mg(2+) as a cofactor.

The enzyme catalyses a myo-inositol phosphate + H2O = myo-inositol + phosphate. Its pathway is polyol metabolism; myo-inositol biosynthesis; myo-inositol from D-glucose 6-phosphate: step 2/2. Its activity is regulated as follows. Inhibited by Li(+) and Na(+). Its function is as follows. Responsible for the provision of inositol required for synthesis of phosphatidylinositol and polyphosphoinositides and involved in the inositol cycle of calcium signaling. The chain is Inositol monophosphatase 2 (INM2) from Saccharomyces cerevisiae (strain ATCC 204508 / S288c) (Baker's yeast).